A 1750-amino-acid chain; its full sequence is Protein TIC 214 (1750 aa).

A run of 6 helical transmembrane segments spans residues 12–32, 69–89, 97–117, 129–149, 177–197, and 216–236; these read KIIN…ALSI, FIMG…YVAL, ILAL…SFFA, LEIY…SCIL, FAWF…LVWI, and IFVI…SIQC. The segment covering 260–277 has biased composition (basic and acidic residues); it reads RERLQKEEERGVEKKEQS. Disordered stretches follow at residues 260 to 282, 617 to 638, 718 to 738, 1205 to 1225, and 1419 to 1512; these read RERL…EEDP, ATTT…KKES, STDK…KQRE, RNSR…PKPV, and ETDS…NKKE. The span at 617–629 shows a compositional bias: low complexity; it reads ATTTNSKTNTTKD. Basic and acidic residues predominate over residues 727–738; sequence KKEEKRENKQRE. Residues 1420 to 1512 show a composition bias toward basic and acidic residues; it reads TDSKQKSETD…TKSDKKNKKE (93 aa).

Belongs to the TIC214 family. In terms of assembly, part of the Tic complex.

The protein resides in the plastid. Its subcellular location is the chloroplast inner membrane. Its function is as follows. Involved in protein precursor import into chloroplasts. May be part of an intermediate translocation complex acting as a protein-conducting channel at the inner envelope. This chain is Protein TIC 214, found in Cuscuta reflexa (Southern Asian dodder).